The primary structure comprises 221 residues: Protein Thf1 (221 aa).

A coiled-coil region spans residues T174–R213.

It belongs to the THF1 family.

In terms of biological role, may be involved in photosynthetic membrane biogenesis. The sequence is that of Protein Thf1 from Prochlorococcus marinus (strain MIT 9211).